A 418-amino-acid chain; its full sequence is Ankyrin repeat and SOCS box protein 6 (418 aa).

ANK repeat units follow at residues glutamate 65–phenylalanine 95, threonine 100–arginine 129, histidine 134–alanine 164, asparagine 168–alanine 203, cysteine 224–glutamate 253, and glutamate 258–cysteine 287. An SOCS box domain is found at alanine 358–aspartate 413.

Belongs to the ankyrin SOCS box (ASB) family. As to quaternary structure, binds APS. Identified in a complex with ELOB and ELOC. Interacts with CUL5 and RNF7. Interacts with SQSTM1. Detected in adipocytes.

It is found in the cytoplasm. Its pathway is protein modification; protein ubiquitination. Its function is as follows. Probable substrate-recognition component of a SCF-like ECS (Elongin-Cullin-SOCS-box protein) E3 ubiquitin-protein ligase complex which mediates the ubiquitination and subsequent proteasomal degradation of target proteins. May play a role in the regulation of cell proliferation and autophagy by promoting the ubiquitination and degradation of SQSTM1. This chain is Ankyrin repeat and SOCS box protein 6 (Asb6), found in Mus musculus (Mouse).